The chain runs to 379 residues: Zinc finger protein 883 (379 aa).

13 consecutive C2H2-type zinc fingers follow at residues 13–35, 41–63, 69–91, 97–119, 125–147, 153–175, 181–203, 209–231, 237–259, 265–287, 293–315, 321–343, and 349–371; these read YLCTECGKGYTCLASLTQHQKTH, YECKICGKSFTRNSNLVQHQRIH, YECNECGKAFSQSTNLIQHQRVH, YECNECEKTFSHRSSLRNHERIH, YPCNECGKAFSHISALTQHHRIH, YECTECGKTFSRSTHLIEHQGIH, YQCKQCRKVFCHSTSLIRHQRTH, YECNECGKAFSHTPAFIQHQRIH, YECNACGKAFNRSAHLTEHQRTH, YVCKECGKTFSRSTHLTEHLKIH, YQCNECQKLFCYRTSLIRHQRTH, YQCNECGKSFSLSSALTKHKRIH, and YQCTKCGDVFCHSTSLIRHQKTH.

The protein belongs to the krueppel C2H2-type zinc-finger protein family.

It localises to the nucleus. Functionally, may be involved in transcriptional regulation. The polypeptide is Zinc finger protein 883 (ZNF883) (Homo sapiens (Human)).